We begin with the raw amino-acid sequence, 315 residues long: Olfactory receptor 2V1 (315 aa).

The Extracellular segment spans residues 1–31; that stretch reads MGRWVNQSYTDGFFLLGIFSHSQTDLVLFSA. Residue Asn6 is glycosylated (N-linked (GlcNAc...) asparagine). The chain crosses the membrane as a helical span at residues 32–52; it reads VMVVFTVALCGNVLLIFLIYL. Topologically, residues 53–58 are cytoplasmic; sequence DAGLHT. Residues 59 to 79 form a helical membrane-spanning segment; that stretch reads PMYFFLSQLSLMDLMLVCNIV. Residues 80–99 are Extracellular-facing; sequence PKMAANFLSGRKSISFVGCG. A disulfide bridge connects residues Cys98 and Cys180. A helical membrane pass occupies residues 100 to 120; the sequence is IQIGFFVSLVGSEGLLLGLMA. Residues 121 to 149 lie on the Cytoplasmic side of the membrane; that stretch reads YDRYVAVSHPLHYPILMNQRVCLQITGSS. A helical transmembrane segment spans residues 150-170; that stretch reads WAFGIIDGVIQMVAAMGLPYC. Residues 171–198 lie on the Extracellular side of the membrane; the sequence is GSRSVDHFFCEVQALLKLACADTSLFDT. Residues 199–219 traverse the membrane as a helical segment; it reads LLFACCVFMLLLPFSIIMASY. Residues 220 to 238 are Cytoplasmic-facing; the sequence is ACILGAVLRIRSAQAWKKA. Residues 239 to 259 form a helical membrane-spanning segment; sequence LATCSSHLTAVTLFYGAAMFM. The Extracellular segment spans residues 260 to 272; sequence YLRPRRYRAPSHD. A helical membrane pass occupies residues 273-293; that stretch reads KVASIFYTVLTPMLNPLIYSL. Topologically, residues 294–315 are cytoplasmic; sequence RNGEVMGALRKGLDRCRIGSQH.

This sequence belongs to the G-protein coupled receptor 1 family.

The protein resides in the cell membrane. Odorant receptor. The chain is Olfactory receptor 2V1 (OR2V1) from Homo sapiens (Human).